The following is a 463-amino-acid chain: MTDKTSNQMWGGRFAAGPDAIMEAINASIGFDKRLAAQDIAGSRAHAAMLAATGVITDSDAEAIREGLLTVLSEIEAGEFTFSTALEDIHMNVEARLKEIIGEPAGRLHTARSRNDQVATDFKLWVRDQFDAAEAGLLALLRALLGQAEAGADWVMPGFTHLQTAQPVTWGHHMMAYVEMFGRDLSRVRDARARMNESPLGSAALAGTSFPIDRHMTAAALGFDRPTANSLDAVSDRDFALEFLSVASICAMHLSRFAEELVIWSSAQFRFVTLSDRFSTGSSIMPQKKNPDAAELIRAKVGRIFGANTALMMVMKGLPLAYSKDMQEDKEQVFDAADNWMLALAAMEGMVRDMTANRDSLAAAAGSGFSTATDLADWLVRVLGLPFRDAHHVTGALVALAESKGCDLPDLSLDEMQSAHAAITEDVYGVLGVENSVNSRQSYGGTAPAQVRAQVARWKEMLA.

The protein belongs to the lyase 1 family. Argininosuccinate lyase subfamily.

Its subcellular location is the cytoplasm. The catalysed reaction is 2-(N(omega)-L-arginino)succinate = fumarate + L-arginine. The protein operates within amino-acid biosynthesis; L-arginine biosynthesis; L-arginine from L-ornithine and carbamoyl phosphate: step 3/3. The chain is Argininosuccinate lyase from Ruegeria pomeroyi (strain ATCC 700808 / DSM 15171 / DSS-3) (Silicibacter pomeroyi).